We begin with the raw amino-acid sequence, 379 residues long: Type II methyltransferase M.CvrRI (379 aa).

This sequence belongs to the N(4)/N(6)-methyltransferase family.

The catalysed reaction is a 2'-deoxyadenosine in DNA + S-adenosyl-L-methionine = an N(6)-methyl-2'-deoxyadenosine in DNA + S-adenosyl-L-homocysteine + H(+). In terms of biological role, a gamma subtype methylase, recognizes the double-stranded sequence 5'-TGCA-3', methylates A-4 on both strands, and protects the DNA from cleavage by the CviRI endonuclease. This chain is Type II methyltransferase M.CvrRI (CVIRIM), found in Chlorella (PBCV-XZ-6E).